A 310-amino-acid polypeptide reads, in one-letter code: MASSSSGGAGGAGGASGAPEVKIHNVYMSNVEEEFARIRGFVEDYPYVAMDTEFPGVVATPLGTFRSKEDFNYQQVFCNVNMLKLIQVGFAMVNDKGELPPTGDVWQFNFNFSFAEDMFSHESVEMLRQAGIDFTLLQNNGIPTAVFGELLTTSGLITDPRITWLTFSSGYDFGYLLKSITLGDLPKEESTFFMCHKTLFPTSFDIKILLRTPNCASAKLKGGLQEVADQLDVKRQGVRHQAGSDALLTAATFFKIKKQFFGDNWNQIAPLICGHMFGLGSSLSLFHSSGSTSRLGDETPQGLIGVPQQA.

Residues Asp-51, Glu-53, Asp-172, and Asp-245 each contribute to the a divalent metal cation site.

This sequence belongs to the CAF1 family. Component of the CCR4-NOT complex at least composed of ccf-1, ccr-4 and let-711, which is required for germ cell development in hermaphrodites. Within the complex interacts with let-711. As to expression, highly expressed in the germline. In particular, highly expressed in germ cells that enter meiosis and progress through the pachytene stage.

The protein resides in the nucleus. The protein localises to the cytoplasm. The catalysed reaction is Exonucleolytic cleavage of poly(A) to 5'-AMP.. In terms of biological role, catalytic component of the CCR4-NOT complex which is one of the major cellular mRNA deadenylases and is linked to various cellular processes including bulk mRNA degradation, miRNA-mediated repression, translational repression during translational initiation and general transcription regulation. Within the complex, plays a role in miRNA-mediated deadenylation in embryos. Within the complex promotes germ cell development and fertility in hermaphrodites. Additional complex functions may be a consequence of its influence on mRNA expression. The protein is CCR4-NOT transcription complex subunit 7 of Caenorhabditis elegans.